The following is a 197-amino-acid chain: Endonuclease V (197 aa).

Residues aspartate 37 and glutamate 101 each coordinate Mg(2+).

The protein belongs to the endonuclease V family. Requires Mg(2+) as cofactor.

It is found in the cytoplasm. It carries out the reaction Endonucleolytic cleavage at apurinic or apyrimidinic sites to products with a 5'-phosphate.. DNA repair enzyme involved in the repair of deaminated bases. Selectively cleaves double-stranded DNA at the second phosphodiester bond 3' to a deoxyinosine leaving behind the intact lesion on the nicked DNA. This Thermococcus kodakarensis (strain ATCC BAA-918 / JCM 12380 / KOD1) (Pyrococcus kodakaraensis (strain KOD1)) protein is Endonuclease V.